Here is a 348-residue protein sequence, read N- to C-terminus: MAATADREKALATALQQIEKQHGKGSIMRLGEQETVKIAAIPTGSVALDVALGVGGLPRGRIVEIYGPESSGKTTVALHAIANAQAEGGICAFIDAEHALDPEYARKLGVDTDSLLVSQPDNGEQALEIADTLVRSGALELIVVDSVAALTPKAEIEGEMGDSHVGLQARLMSQALRKMTGALNAAGTTAIFINQLREKIGVMFGSPETTTGGRALKFYSSVRLDVRRVETLKDGSEMVGNRTRVKVAKNKVAPPFKQAEFDILYGQGISREGSLIDMGVDCGIITKSGSWFSYNNEQLGQGKENVRKFLRGNPDVANEIEDKILTHLGLREAEVPEGVDPRTGEVEF.

67-74 (GPESSGKT) serves as a coordination point for ATP.

Belongs to the RecA family.

The protein resides in the cytoplasm. Can catalyze the hydrolysis of ATP in the presence of single-stranded DNA, the ATP-dependent uptake of single-stranded DNA by duplex DNA, and the ATP-dependent hybridization of homologous single-stranded DNAs. It interacts with LexA causing its activation and leading to its autocatalytic cleavage. This chain is Protein RecA, found in Cutibacterium acnes (Propionibacterium acnes).